Reading from the N-terminus, the 221-residue chain is Ribose-5-phosphate isomerase A (221 aa).

Residues Thr-26 to Thr-29, Asp-81 to Asp-84, and Lys-94 to Gly-97 contribute to the substrate site. Glu-103 acts as the Proton acceptor in catalysis. Position 121 (Lys-121) interacts with substrate.

It belongs to the ribose 5-phosphate isomerase family. As to quaternary structure, homodimer.

The enzyme catalyses aldehydo-D-ribose 5-phosphate = D-ribulose 5-phosphate. It functions in the pathway carbohydrate degradation; pentose phosphate pathway; D-ribose 5-phosphate from D-ribulose 5-phosphate (non-oxidative stage): step 1/1. Catalyzes the reversible conversion of ribose-5-phosphate to ribulose 5-phosphate. This is Ribose-5-phosphate isomerase A from Bacillus mycoides (strain KBAB4) (Bacillus weihenstephanensis).